Here is a 517-residue protein sequence, read N- to C-terminus: ATP synthase subunit alpha 1 (517 aa).

176-183 (GDRQTGKT) contacts ATP.

It belongs to the ATPase alpha/beta chains family. F-type ATPases have 2 components, CF(1) - the catalytic core - and CF(0) - the membrane proton channel. CF(1) has five subunits: alpha(3), beta(3), gamma(1), delta(1), epsilon(1). CF(0) has three main subunits: a(1), b(2) and c(9-12). The alpha and beta chains form an alternating ring which encloses part of the gamma chain. CF(1) is attached to CF(0) by a central stalk formed by the gamma and epsilon chains, while a peripheral stalk is formed by the delta and b chains.

It localises to the cell inner membrane. It carries out the reaction ATP + H2O + 4 H(+)(in) = ADP + phosphate + 5 H(+)(out). Functionally, produces ATP from ADP in the presence of a proton gradient across the membrane. The alpha chain is a regulatory subunit. The protein is ATP synthase subunit alpha 1 of Shewanella frigidimarina (strain NCIMB 400).